The chain runs to 294 residues: Nucleotide-binding protein A2cp1_0165 (294 aa).

17 to 24 (GVSGSGKS) provides a ligand contact to ATP. Residue 68–71 (DARE) coordinates GTP.

This sequence belongs to the RapZ-like family.

In terms of biological role, displays ATPase and GTPase activities. The sequence is that of Nucleotide-binding protein A2cp1_0165 from Anaeromyxobacter dehalogenans (strain 2CP-1 / ATCC BAA-258).